The chain runs to 620 residues: Chaperone protein DnaK (620 aa).

Residues 579-620 (KAQKEASAGAEASEDASGPSSTGSASDDDVVDADYEVVDEDK) form a disordered region. The span at 583–603 (EASAGAEASEDASGPSSTGSA) shows a compositional bias: low complexity. The span at 604–620 (SDDDVVDADYEVVDEDK) shows a compositional bias: acidic residues.

This sequence belongs to the heat shock protein 70 family.

Acts as a chaperone. In Methanococcoides burtonii (strain DSM 6242 / NBRC 107633 / OCM 468 / ACE-M), this protein is Chaperone protein DnaK.